The chain runs to 557 residues: Urocanate hydratase (557 aa).

The segment at 1 to 20 (MSNPRHNEREVRSPRGDELN) is disordered. NAD(+) is bound by residues 52–53 (GG), Q130, 176–178 (GMG), E196, R201, 242–243 (NA), 263–267 (QTSAH), 273–274 (YL), and Y322. C410 is a catalytic residue. NAD(+) is bound at residue G492.

It belongs to the urocanase family. NAD(+) is required as a cofactor.

Its subcellular location is the cytoplasm. The catalysed reaction is 4-imidazolone-5-propanoate = trans-urocanate + H2O. It participates in amino-acid degradation; L-histidine degradation into L-glutamate; N-formimidoyl-L-glutamate from L-histidine: step 2/3. Functionally, catalyzes the conversion of urocanate to 4-imidazolone-5-propionate. This Brucella abortus (strain S19) protein is Urocanate hydratase.